A 151-amino-acid chain; its full sequence is tRNA-specific adenosine deaminase (151 aa).

One can recognise a CMP/dCMP-type deaminase domain in the interval 1 to 111 (MGKEYFLKVA…LDKKHGGVVS (111 aa)). Position 52 (His-52) interacts with Zn(2+). The Proton donor role is filled by Glu-54. Residues Cys-82 and Cys-85 each contribute to the Zn(2+) site.

It belongs to the cytidine and deoxycytidylate deaminase family. Homodimer. The cofactor is Zn(2+).

The catalysed reaction is adenosine(34) in tRNA + H2O + H(+) = inosine(34) in tRNA + NH4(+). Functionally, catalyzes the deamination of adenosine to inosine at the wobble position 34 of tRNA(Arg2). This is tRNA-specific adenosine deaminase from Aquifex aeolicus (strain VF5).